Here is a 552-residue protein sequence, read N- to C-terminus: uncharacterized protein (552 aa).

Position 29–36 (29–36 (GENAWGKS)) interacts with ATP. The region spanning 379-469 (RCWLLVEGET…AEREHLTALP (91 aa)) is the Toprim domain.

This is an uncharacterized protein from Escherichia coli (strain K12).